A 366-amino-acid chain; its full sequence is Terpene cyclase atmA (366 aa).

A run of 8 helical transmembrane segments spans residues 9-29, 84-104, 113-133, 162-182, 195-215, 233-253, 291-311, and 333-353; these read FLLL…NNGF, LTGL…VVHI, GMVI…GIVI, GLVV…SLPA, IAAW…HHLF, VYHF…SAFV, AGLF…TMVW, and ILRL…VRLI.

It belongs to the membrane-bound ascI terpene cyclase family.

The protein localises to the membrane. Functionally, aflatrem synthesis protein A; part of the ATM2 gene cluster that mediates the biosynthesis of aflatrem, a tremorgenic mycotoxin with acute neurotoxic effects. Synthesis of geranylgeranyl diphosphate (GGPP) by AtmG (a GGPP synthase) precedes condensation of GGPP with indole 3-glycerol phosphate, followed by epoxidation and cyclization by AtmM (a FAD-dependent monooxygenase) and AtmC (a prenyltransferase) to produce paspaline. AtmB is also essential for paspaline production, but its exact role has not been identified yet. AtmP, a cytochrome P450 monooxygenase, subsequently converts paspaline to 13-desoxypaxilline via PC-M6 by removal of the C-30 methyl group and oxidation at C-10. AtmQ, a cytochrome P450 monooxygenase, then catalyzes the oxidation of 13-desoxypaxilline, first at C-7 to produce paspalicine and then at C-13 to form paspalinine. Finally, AtmD prenylates paspalinine to form aflatrem. The role of atmA in the aflatrem biosynthesis is still unknown. This Aspergillus flavus protein is Terpene cyclase atmA.